A 1377-amino-acid polypeptide reads, in one-letter code: Protein RhsA (1377 aa).

A run of 28 repeats spans residues 330–352 (GKQVRSFTYDDKYRGRMVAHRHT), 353–374 (GRPEIRYRYDSDGRVTEQLNPA), 375–417 (GLSY…EHAD), 418–438 (GSVTQSQFDAVGRLRAQTDAA), 439–460 (GRTTEYSPDVVTGLITRITTPD), 461–481 (GRASAFYYNHHNQLTSATGPD), 482–502 (GLELRREYDELGRLIQETAPD), 503–525 (GDITRYRYDNPHSDLPCATEDAT), 526–546 (GSRKTMTWSRYGQLLSFTDCS), 547–567 (GYVTRYDHDRFGQMTAVHREE), 568–588 (GLSQYRAYDSRGQLIAVKDTQ), 589–609 (GHETRYEYNIAGDLTAVIAPD), 610–629 (GSRNGTQYDAWGKAVRTTQG), 630–650 (GLTRSMEYDAAGRVIRLTSEN), 651–671 (GSHTTFRYDVLDRLIQETGFD), 672–691 (GRTQRYHHDLTGKLIRSEDE), 692–711 (GLVTHWHYDEADRLTHRTVK), 712–734 (GETAERWQYDERGWLTDISHISE), 735–758 (GHRVAVHYRYDEKGRLTGERQTVH), 808–828 (GDTPLVEYTRDRLHRETLRSF), 829–850 (GRYELTTAYTPAGQLQSQHLNS), 851–871 (LLSDRDYTWNDNGELIRISSP), 872–894 (RQTRSYSYSTTGRLTGVHTTAAN), 895–930 (LDIRIPYATDPAGNRLPDPELHPDSTLSMWPDNRIA), 931–959 (RDAHYLYRYDRHGRLTEKTDLIPEGVIRT), 960–984 (DDERTHRYHYDSQHRLVHYTRTQYE), 985–1019 (EPLVESRYLYDPLGRRVAKRVWRRERDLTGWMSLS), and 1162–1186 (GTTEWCAEYDEWGNLLNEENPHQLQ). Residues 330-1186 (GKQVRSFTYD…LNEENPHQLQ (857 aa)) form a 28 X approximate tandem repeats region. Residues 1356–1377 (DAKSTQKAWNCRHSRQSNDKKR) form a disordered region.

Belongs to the RHS family.

Rhs elements have a nonessential function. They may play an important role in the natural ecology of the cell. In Escherichia coli (strain K12), this protein is Protein RhsA (rhsA).